The following is a 220-amino-acid chain: Cytidylate kinase (220 aa).

10–18 (GPASSGKST) is a binding site for ATP.

This sequence belongs to the cytidylate kinase family. Type 1 subfamily.

It is found in the cytoplasm. The enzyme catalyses CMP + ATP = CDP + ADP. It catalyses the reaction dCMP + ATP = dCDP + ADP. The protein is Cytidylate kinase of Lactococcus lactis subsp. cremoris (strain MG1363).